The primary structure comprises 477 residues: Glutamyl-tRNA(Gln) amidotransferase subunit A (477 aa).

Catalysis depends on charge relay system residues lysine 76 and serine 151. The Acyl-ester intermediate role is filled by serine 175.

This sequence belongs to the amidase family. GatA subfamily. As to quaternary structure, heterotrimer of A, B and C subunits.

The catalysed reaction is L-glutamyl-tRNA(Gln) + L-glutamine + ATP + H2O = L-glutaminyl-tRNA(Gln) + L-glutamate + ADP + phosphate + H(+). Its function is as follows. Allows the formation of correctly charged Gln-tRNA(Gln) through the transamidation of misacylated Glu-tRNA(Gln) in organisms which lack glutaminyl-tRNA synthetase. The reaction takes place in the presence of glutamine and ATP through an activated gamma-phospho-Glu-tRNA(Gln). This chain is Glutamyl-tRNA(Gln) amidotransferase subunit A, found in Chlorobium phaeobacteroides (strain BS1).